The chain runs to 247 residues: Uridylate kinase (247 aa).

Position 16 to 19 (16 to 19 (KLSG)) interacts with ATP. Glycine 58 contacts UMP. Residues glycine 59 and arginine 63 each coordinate ATP. Residues aspartate 78 and 139 to 146 (TGNPFFTT) each bind UMP. Residues threonine 166, tyrosine 172, and aspartate 175 each contribute to the ATP site.

It belongs to the UMP kinase family. Homohexamer.

It is found in the cytoplasm. It catalyses the reaction UMP + ATP = UDP + ADP. The protein operates within pyrimidine metabolism; CTP biosynthesis via de novo pathway; UDP from UMP (UMPK route): step 1/1. Inhibited by UTP. Functionally, catalyzes the reversible phosphorylation of UMP to UDP. This Xylella fastidiosa (strain Temecula1 / ATCC 700964) protein is Uridylate kinase.